Here is a 538-residue protein sequence, read N- to C-terminus: Pentachlorophenol 4-monooxygenase (538 aa).

FAD-binding positions include 16–45 and 288–298; these read AVLI…MIDR and YRKGNVFLAGD.

The protein belongs to the PheA/TfdB FAD monooxygenase family. In terms of assembly, homodimer. Requires FAD as cofactor.

It carries out the reaction pentachlorophenol + NADPH + O2 + H(+) = 2,3,5,6-tetrachloro-1,4-benzoquinone + chloride + NADP(+) + H2O. It catalyses the reaction 2,3,5,6-tetrachlorophenol + NADPH + O2 = 2,3,5,6-tetrachlorohydroquinone + NADP(+) + H2O. The protein operates within xenobiotic degradation; pentachlorophenol degradation. In terms of biological role, dechlorination of pentachlorophenol to tetrachlorobenzoquinone. Also removes hydrogen and nitro, amino, and cyano groups from benzene ring at the para position in relation to the hydroxyl of phenol. The sequence is that of Pentachlorophenol 4-monooxygenase (pcpB) from Sphingobium chlorophenolicum.